The following is a 155-amino-acid chain: MVRRFKRAVKYRRGSRTHGWGRVGQHRKSGGSGGKGMVGFHKHKWSLVMKYGESGTGWPFYGKHGFKQPPTITVEWRPINVGTLAEVVRELKSEGKIREEGGKYVVNLLELGYNKLLGGGSIDVPVIVYTPVASKTAVEKIQRAGGEVRVVAIHR.

Positions M1–R16 are enriched in basic residues. Positions M1–K35 are disordered.

This sequence belongs to the universal ribosomal protein uL15 family. Part of the 50S ribosomal subunit.

Binds to the 23S rRNA. This chain is Large ribosomal subunit protein uL15, found in Pyrobaculum arsenaticum (strain DSM 13514 / JCM 11321 / PZ6).